The following is a 159-amino-acid chain: Phosphopantetheine adenylyltransferase (159 aa).

S8 is a binding site for substrate. ATP-binding positions include 8–9 and H16; that span reads SF. Residues K40, T72, and R86 each coordinate substrate. ATP contacts are provided by residues 87–89, E97, and 122–128; these read GLR and YSFLSSS.

The protein belongs to the bacterial CoaD family. Homohexamer. Mg(2+) is required as a cofactor.

Its subcellular location is the cytoplasm. It carries out the reaction (R)-4'-phosphopantetheine + ATP + H(+) = 3'-dephospho-CoA + diphosphate. It participates in cofactor biosynthesis; coenzyme A biosynthesis; CoA from (R)-pantothenate: step 4/5. Functionally, reversibly transfers an adenylyl group from ATP to 4'-phosphopantetheine, yielding dephospho-CoA (dPCoA) and pyrophosphate. The sequence is that of Phosphopantetheine adenylyltransferase from Synechocystis sp. (strain ATCC 27184 / PCC 6803 / Kazusa).